A 300-amino-acid polypeptide reads, in one-letter code: Actin-related protein 2/3 complex subunit 2-B (300 aa).

The protein belongs to the ARPC2 family. Component of the Arp2/3 complex composed of actr2/arp2, actr3/arp3, arpc1 (arpc1a or arpc1b), arpc2, arpc3, arpc4 and arpc5.

It localises to the cytoplasm. The protein localises to the cytoskeleton. It is found in the cell projection. Its subcellular location is the nucleus. Actin-binding component of the Arp2/3 complex, a multiprotein complex that mediates actin polymerization upon stimulation by nucleation-promoting factor (NPF). The Arp2/3 complex mediates the formation of branched actin networks in the cytoplasm, providing the force for cell motility. In addition to its role in the cytoplasmic cytoskeleton, the Arp2/3 complex also promotes actin polymerization in the nucleus, thereby regulating gene transcription and repair of damaged DNA. The Arp2/3 complex promotes homologous recombination (HR) repair in response to DNA damage by promoting nuclear actin polymerization, leading to drive motility of double-strand breaks (DSBs). This is Actin-related protein 2/3 complex subunit 2-B (arpc2-b) from Xenopus laevis (African clawed frog).